The primary structure comprises 314 residues: MGAGDKTAAGMPRIGMGTAVQGPKADPIRRAVLRAIQIGYRHFDTAAHYETEAPIGEAAAEAVRSGAVASRDELFITSKLWCSDAHRDRVVPALRQTLRNLQMEYVDLYLVHWPVSMKPGRFKAPFTAEDFVPFDMRAVWEAMEECHRLGLAKAIGVANFSCKKLETLLSFATIPPTVNQVEVNPVWQQRKLREFCRGKGIQLCAYSPLGAKGTHWGSDAVMDAGVLQEIAASRGKSVAQVCLRWVYEQGDCLIVKSFDEARMRENLDVDGWELTEEERRRIAEIPQRKINLGKRYVSEHGPYKSLEELWDGEI.

The tract at residues 1 to 22 (MGAGDKTAAGMPRIGMGTAVQG) is disordered. Residue Asp-44 participates in NADP(+) binding. The Proton donor role is filled by Tyr-49. A substrate-binding site is contributed by His-112. Residues 158–159 (AN), Gln-180, 258–266 (FDEARMREN), and 273–281 (ELTEEERRR) contribute to the NADP(+) site.

Belongs to the aldo/keto reductase family. Mostly expressed in root tissues, observed in mesocotyl and embryonic roots, seedling roots, crown and seedling leafes, mature bracts, anthers, pistil, caryopsis and embryos.

The enzyme catalyses 2'-deoxymugineate + NAD(+) = 3''-deamino-3''-oxonicotianamine + NADH + H(+). It catalyses the reaction 2'-deoxymugineate + NADP(+) = 3''-deamino-3''-oxonicotianamine + NADPH + H(+). It functions in the pathway siderophore biosynthesis. Functionally, catalyzes the reduction of a 3''-keto intermediate during the biosynthesis of 2'-deoxymugineic acid (DMA) from L-Met. Involved in the formation of phytosiderophores (MAs) belonging to the mugineic acid family and required to acquire iron. The chain is Deoxymugineic acid synthase 1-B from Triticum aestivum (Wheat).